The sequence spans 496 residues: Probable cytosol aminopeptidase (496 aa).

Positions 266 and 271 each coordinate Mn(2+). Lys278 is an active-site residue. Mn(2+) is bound by residues Asp289, Asp348, and Glu350. Residue Arg352 is part of the active site.

Belongs to the peptidase M17 family. Mn(2+) serves as cofactor.

It localises to the cytoplasm. The enzyme catalyses Release of an N-terminal amino acid, Xaa-|-Yaa-, in which Xaa is preferably Leu, but may be other amino acids including Pro although not Arg or Lys, and Yaa may be Pro. Amino acid amides and methyl esters are also readily hydrolyzed, but rates on arylamides are exceedingly low.. It catalyses the reaction Release of an N-terminal amino acid, preferentially leucine, but not glutamic or aspartic acids.. In terms of biological role, presumably involved in the processing and regular turnover of intracellular proteins. Catalyzes the removal of unsubstituted N-terminal amino acids from various peptides. The sequence is that of Probable cytosol aminopeptidase from Stutzerimonas stutzeri (strain A1501) (Pseudomonas stutzeri).